The following is a 397-amino-acid chain: NADH-quinone oxidoreductase subunit H 1 (397 aa).

10 helical membrane passes run 7–27 (FIFISLVKAAVIFGVLMTTLA), 84–104 (PFLAITMALLSISVIPFGPVI), 120–140 (IGVLFILAVSSMGVYGIALAG), 156–176 (SAQMISYELPMSLAIAAPLLI), 198–218 (LLSGPFPQVISFIIFIIAAFA), 258–278 (MITVSAMATLLFLGGWMAPWP), 279–299 (AAYGSSLVPSILFGISGLVLL), 313–333 (TFPAFGIIFLGIAGIFLLPMV), 337–357 (LLPLFWFCAKTGAILFAFMWI), and 376–396 (FLFPVAMLNLLVTGFLVAWTT).

This sequence belongs to the complex I subunit 1 family. In terms of assembly, NDH-1 is composed of 14 different subunits. Subunits NuoA, H, J, K, L, M, N constitute the membrane sector of the complex.

Its subcellular location is the cell inner membrane. The enzyme catalyses a quinone + NADH + 5 H(+)(in) = a quinol + NAD(+) + 4 H(+)(out). Its function is as follows. NDH-1 shuttles electrons from NADH, via FMN and iron-sulfur (Fe-S) centers, to quinones in the respiratory chain. The immediate electron acceptor for the enzyme in this species is believed to be ubiquinone. Couples the redox reaction to proton translocation (for every two electrons transferred, four hydrogen ions are translocated across the cytoplasmic membrane), and thus conserves the redox energy in a proton gradient. This subunit may bind ubiquinone. The polypeptide is NADH-quinone oxidoreductase subunit H 1 (Solibacter usitatus (strain Ellin6076)).